The sequence spans 472 residues: 3-isopropylmalate dehydratase large subunit (472 aa).

[4Fe-4S] cluster-binding residues include Cys347, Cys407, and Cys410.

This sequence belongs to the aconitase/IPM isomerase family. LeuC type 1 subfamily. As to quaternary structure, heterodimer of LeuC and LeuD. [4Fe-4S] cluster serves as cofactor.

The enzyme catalyses (2R,3S)-3-isopropylmalate = (2S)-2-isopropylmalate. Its pathway is amino-acid biosynthesis; L-leucine biosynthesis; L-leucine from 3-methyl-2-oxobutanoate: step 2/4. Its function is as follows. Catalyzes the isomerization between 2-isopropylmalate and 3-isopropylmalate, via the formation of 2-isopropylmaleate. The sequence is that of 3-isopropylmalate dehydratase large subunit from Bacillus subtilis (strain 168).